A 207-amino-acid polypeptide reads, in one-letter code: 3-demethoxyubiquinol 3-hydroxylase (207 aa).

Glu56, Glu86, His89, Glu138, Glu170, and His173 together coordinate Fe cation.

This sequence belongs to the COQ7 family. Requires Fe cation as cofactor.

Its subcellular location is the cell membrane. It carries out the reaction a 5-methoxy-2-methyl-3-(all-trans-polyprenyl)benzene-1,4-diol + AH2 + O2 = a 3-demethylubiquinol + A + H2O. The protein operates within cofactor biosynthesis; ubiquinone biosynthesis. Functionally, catalyzes the hydroxylation of 2-nonaprenyl-3-methyl-6-methoxy-1,4-benzoquinol during ubiquinone biosynthesis. This chain is 3-demethoxyubiquinol 3-hydroxylase, found in Cupriavidus necator (strain ATCC 17699 / DSM 428 / KCTC 22496 / NCIMB 10442 / H16 / Stanier 337) (Ralstonia eutropha).